Here is a 287-residue protein sequence, read N- to C-terminus: ATP synthase gamma chain (287 aa).

The protein belongs to the ATPase gamma chain family. F-type ATPases have 2 components, CF(1) - the catalytic core - and CF(0) - the membrane proton channel. CF(1) has five subunits: alpha(3), beta(3), gamma(1), delta(1), epsilon(1). CF(0) has three main subunits: a, b and c.

Its subcellular location is the cell inner membrane. Its function is as follows. Produces ATP from ADP in the presence of a proton gradient across the membrane. The gamma chain is believed to be important in regulating ATPase activity and the flow of protons through the CF(0) complex. This Colwellia psychrerythraea (strain 34H / ATCC BAA-681) (Vibrio psychroerythus) protein is ATP synthase gamma chain.